Consider the following 337-residue polypeptide: MNPYPHLRPLLFCLNPEIAHNLTLQILSRAAVFIPRIKAGNPIHLLGHTFPNRLGLAAGLDKNAVAISAFDRLGFGFIEVGTATPRPQSGNPKPRLFRLPEHQAIINCMGFNNDGVVALCQQVAAVKKRTRALIGINIGKNKLTPNERAADDYLIAMSTAYPYADYLAINISSPNTVGLRDLQHGAALCELLQRLKTERDKLSAVYEKTVPLLVKIAPDNEREQLDEMLSIIEDSGIDGIIATNTTLDKTAVTGHRYADEQGGLSGKPLTEKSTKIIAHIRERLPDLPLIASGGVMSADDYYAKLEAGADLVQIYSGLIYHGPQLIKDCLRMPSPQR.

Residues 58-62 (AGLDK) and Thr-82 contribute to the FMN site. Position 62 (Lys-62) interacts with substrate. Position 107–111 (107–111 (NCMGF)) interacts with substrate. Asn-137 and Asn-170 together coordinate FMN. Residue Asn-170 participates in substrate binding. Ser-173 functions as the Nucleophile in the catalytic mechanism. Residue Asn-175 coordinates substrate. Residues Lys-215 and Thr-243 each contribute to the FMN site. Residue 244–245 (NT) participates in substrate binding. FMN-binding positions include Gly-266, Gly-294, and 315–316 (YS).

Belongs to the dihydroorotate dehydrogenase family. Type 2 subfamily. As to quaternary structure, monomer. FMN is required as a cofactor.

The protein localises to the cell membrane. It catalyses the reaction (S)-dihydroorotate + a quinone = orotate + a quinol. It participates in pyrimidine metabolism; UMP biosynthesis via de novo pathway; orotate from (S)-dihydroorotate (quinone route): step 1/1. Catalyzes the conversion of dihydroorotate to orotate with quinone as electron acceptor. The sequence is that of Dihydroorotate dehydrogenase (quinone) from Dichelobacter nodosus (strain VCS1703A).